The chain runs to 375 residues: Dihydroorotate dehydrogenase (quinone) (375 aa).

Residues 78–82 (AGLDK) and Thr-102 contribute to the FMN site. Residue Lys-82 participates in substrate binding. 127-131 (NRMGF) provides a ligand contact to substrate. FMN-binding residues include Asn-159 and Asn-192. A substrate-binding site is contributed by Asn-192. The Nucleophile role is filled by Ser-195. Asn-197 contacts substrate. 2 residues coordinate FMN: Lys-230 and Thr-258. 259 to 260 (NT) contributes to the substrate binding site. Residues Gly-288, Gly-317, and 338-339 (YT) contribute to the FMN site.

It belongs to the dihydroorotate dehydrogenase family. Type 2 subfamily. In terms of assembly, monomer. It depends on FMN as a cofactor.

The protein resides in the cell membrane. The enzyme catalyses (S)-dihydroorotate + a quinone = orotate + a quinol. It participates in pyrimidine metabolism; UMP biosynthesis via de novo pathway; orotate from (S)-dihydroorotate (quinone route): step 1/1. Catalyzes the conversion of dihydroorotate to orotate with quinone as electron acceptor. This Cyanothece sp. (strain PCC 7425 / ATCC 29141) protein is Dihydroorotate dehydrogenase (quinone).